The sequence spans 2799 residues: E3 ubiquitin-protein ligase UBR5 (2799 aa).

Thr2 bears the N-acetylthreonine mark. Residues 77–88 (DRLELGKPDNND) are compositionally biased toward basic and acidic residues. The tract at residues 77–175 (DRLELGKPDN…DRGSGLLGSQ (99 aa)) is disordered. Polar residues predominate over residues 89 to 110 (GSKLNSNSGAGRTSRPGRTSDS). Ser110 carries the post-translational modification Phosphoserine. A compositionally biased stretch (gly residues) spans 135-144 (GVGGSGGGSS). A UBA domain is found at 184–226 (VIPEELISQAQVVLQGKSRSVIIRELQRTNLDVNLAVNNLLSR). Ser327 carries the post-translational modification Phosphoserine. The segment covering 328-347 (FDNERGSTSKEGEPNLDKKN) has biased composition (basic and acidic residues). The tract at residues 328–352 (FDNERGSTSKEGEPNLDKKNTPVQS) is disordered. Phosphoserine occurs at positions 352 and 578. Positions 579-648 (PESLKNMEKA…APKEEEKVNE (70 aa)) are disordered. Residues 583–604 (KNMEKASKTTEAKPESKQEPVK) show a composition bias toward basic and acidic residues. Residue Ser612 is modified to Phosphoserine. Residues 614–628 (ASTCSDASSIASSAS) are compositionally biased toward low complexity. Thr637 carries the post-translational modification Phosphothreonine. Ser808, Ser928, and Ser1018 each carry phosphoserine. Disordered regions lie at residues 999-1031 (AGLG…PDPP) and 1052-1075 (TAAT…EPSV). Pro residues predominate over residues 1017-1031 (VSPPIAPPSWVPDPP). Residues 1052–1073 (TAATGTGQGPSTSTIPGPSTEP) show a composition bias toward polar residues. Residues Thr1115 and Thr1135 each carry the phosphothreonine modification. The UBR-type zinc-finger motif lies at 1177–1245 (DTCSFTWTGA…EKCKCKTLIA (69 aa)). Zn(2+) contacts are provided by Cys1179, Cys1196, Cys1199, Cys1208, Cys1211, Cys1215, His1216, and His1219. The residue at position 1227 (Ser1227) is a Phosphoserine. 3 residues coordinate Zn(2+): Cys1232, Cys1234, and Cys1240. The interval 1299–1318 (REDRNRKTASPEDSDMPDHD) is disordered. Phosphoserine occurs at positions 1308, 1355, 1375, and 1481. Residues 1515 to 1740 (SVEPLPPRPS…PSSTSTPAAS (226 aa)) form a disordered region. Residues 1524 to 1537 (SSDQSSSSSQSQSS) are compositionally biased toward low complexity. Residues 1538–1553 (YIIRNPQQRRISQSQP) show a composition bias toward polar residues. Residue Ser1549 is modified to Phosphoserine. Composition is skewed to acidic residues over residues 1559–1574 (EEQD…EVEV) and 1605–1614 (HDEDGSDMEL). Positions 1629-1638 (NHSNQDNASG) are enriched in polar residues. 3 stretches are compositionally biased toward low complexity: residues 1641–1657 (SVVT…ASSV), 1668–1681 (SNDS…SSQS), and 1726–1740 (AAST…PAAS). Thr1736 is subject to Phosphothreonine. Position 1741 is a phosphoserine (Ser1741). Tyr1746 is modified (phosphotyrosine). Ser1780 bears the Phosphoserine mark. The interval 1859–1890 (LASAGDPGHPNHPLHASQNSARRERMTAREEA) is disordered. A compositionally biased stretch (basic and acidic residues) spans 1879 to 1890 (ARRERMTAREEA). Thr1969 bears the Phosphothreonine mark. The interval 1984–2021 (GIDNEDSEHENDDDTNQSATLNDKDDDSLPAETGQNHP) is disordered. Acidic residues predominate over residues 1985–1998 (IDNEDSEHENDDDT). Phosphoserine occurs at positions 1990, 2026, and 2028. Thr2030 bears the Phosphothreonine mark. Ser2076 is modified (phosphoserine). The tract at residues 2117–2142 (RQKKEGEEQPVLPEETESSKPGPSAH) is disordered. Position 2213 is a phosphothreonine (Thr2213). Phosphoserine is present on residues Ser2241 and Ser2289. The segment at 2323 to 2392 (HTSLMQRLRN…PSDDPEPLPA (70 aa)) is disordered. 2 stretches are compositionally biased toward basic and acidic residues: residues 2332–2348 (NRGE…EMRR) and 2356–2368 (SRRD…RRQL). Residues 2377–2454 (PASEGNPSDD…AMELIIAHGR (78 aa)) form the PABC domain. In terms of domain architecture, HECT spans 2462–2799 (LDLGLVDSSE…AIKTKNFGFV (338 aa)). Ser2469, Ser2484, and Ser2486 each carry phosphoserine. The disordered stretch occupies residues 2473–2493 (VQQENRKRHGSSRSVVDMDLD). Cys2768 functions as the Glycyl thioester intermediate in the catalytic mechanism.

The protein belongs to the UBR5 family. In terms of assembly, homotetramer; composed of a dimer of dimers. Associates with CDK9 and TFIIS/TCEA1 and forms a transcription regulatory complex made of CDK9, RNAP II, UBR5 and TFIIS/TCEA1 that can stimulate target gene transcription (e.g. gamma fibrinogen/FGG) by recruiting their promoters. Associates with the E3 ligase complex containing DYRK2, EDD/UBR5, DDB1 and DCAF1 proteins (EDVP complex). Binds TOPBP1. Interacts with PIH1D1. Interacts with CIB1. (Microbial infection) Interacts with human T-cell leukemia virus 1/HTLV-1 protein HBZ; this interaction modulates HBZ stability. As to expression, widely expressed. Most abundant in testis and expressed at high levels in brain, pituitary and kidney.

It is found in the nucleus. The protein resides in the cytoplasm. It catalyses the reaction S-ubiquitinyl-[E2 ubiquitin-conjugating enzyme]-L-cysteine + [acceptor protein]-L-lysine = [E2 ubiquitin-conjugating enzyme]-L-cysteine + N(6)-ubiquitinyl-[acceptor protein]-L-lysine.. The protein operates within protein modification; protein ubiquitination. In terms of biological role, E3 ubiquitin-protein ligase involved in different protein quality control pathways in the cytoplasm and nucleus. Mainly acts as a ubiquitin chain elongator that extends pre-ubiquitinated substrates. Component of the N-end rule pathway: ubiquitinates proteins bearing specific N-terminal residues that are destabilizing according to the N-end rule, leading to their degradation. Recognizes type-1 N-degrons, containing positively charged amino acids (Arg, Lys and His). Together with UBR4, part of a cytoplasm protein quality control pathway that prevents protein aggregation by catalyzing assembly of heterotypic 'Lys-11'-/'Lys-48'-linked branched ubiquitin chains on aggregated proteins, leading to substrate recognition by the segregase p97/VCP and degradation by the proteasome: UBR5 is probably branching multiple 'Lys-48'-linked chains of substrates initially modified with mixed conjugates by UBR4. Together with ITCH, catalyzes 'Lys-48'-/'Lys-63'-branched ubiquitination of TXNIP, leading to its degradation: UBR5 mediates branching of 'Lys-48'-linked chains of substrates initially modified with 'Lys-63'-linked conjugates by ITCH. Catalytic component of a nuclear protein quality control pathway that mediates ubiquitination and degradation of unpaired transcription factors (i.e. transcription factors that are not assembled into functional multiprotein complexes): specifically recognizes and binds degrons that are not accessible when transcription regulators are associated with their coactivators. Ubiquitinates various unpaired transcription regulator (MYC, SUPT4H1, SUPT5H, CDC20 and MCRS1), as well as ligand-bound nuclear receptors (ESR1, NR1H3, NR3C1, PGR, RARA, RXRA AND VDR) that are not associated with their nuclear receptor coactivators (NCOAs). Involved in maturation and/or transcriptional regulation of mRNA by mediating polyubiquitination and activation of CDK9. Also acts as a regulator of DNA damage response by acting as a suppressor of RNF168, an E3 ubiquitin-protein ligase that promotes accumulation of 'Lys-63'-linked histone H2A and H2AX at DNA damage sites, thereby acting as a guard against excessive spreading of ubiquitinated chromatin at damaged chromosomes. Regulates DNA topoisomerase II binding protein (TopBP1) in the DNA damage response. Ubiquitinates acetylated PCK1. Acts as a positive regulator of the canonical Wnt signaling pathway by mediating (1) ubiquitination and stabilization of CTNNB1, and (2) 'Lys-48'-linked ubiquitination and degradation of TLE3. Promotes disassembly of the mitotic checkpoint complex (MCC) from the APC/C complex by catalyzing ubiquitination of BUB1B, BUB3 and CDC20. Plays an essential role in extraembryonic development. Required for the maintenance of skeletal tissue homeostasis by acting as an inhibitor of hedgehog (HH) signaling. This chain is E3 ubiquitin-protein ligase UBR5 (UBR5), found in Homo sapiens (Human).